We begin with the raw amino-acid sequence, 615 residues long: AP-1-like transcription factor yap1 (615 aa).

Residues 27-50 (SSNNPTQKQQTVTHNSEANQNLNH) are compositionally biased toward polar residues. Disordered stretches follow at residues 27–84 (SSNN…EDSP) and 99–180 (NESL…RKEK). The Bipartite nuclear localization signal motif lies at 35–42 (QQTVTHNS). Residues 52 to 67 (PGHASSGSFSVSPPSG) are compositionally biased toward low complexity. Residues 68-75 (LDGSVNQS) carry the Bipartite nuclear localization signal motif. The span at 118–147 (PGDKRKDIDGQVNDKEDSGKKRRESDEKAA) shows a compositional bias: basic and acidic residues. The 64-residue stretch at 157 to 220 (SEPTSKRKAQ…ERLQLELKEY (64 aa)) folds into the bZIP domain. The segment at 162–183 (KRKAQNRAAQRAFRERKEKHLK) is basic motif. The tract at residues 185–192 (LEAKVEEL) is leucine-zipper. The transcription activation 1 stretch occupies residues 214–364 (QLELKEYRKR…RGYQVNSSYS (151 aa)). Residues 270–294 (LFTNTQTSKSNQNKAKDNPTATPRS) show a composition bias toward polar residues. Residues 270 to 416 (LFTNTQTSKS…AVKATESSTP (147 aa)) form a disordered region. The segment at 289–301 (TATPRSEAQVPGV) is n-CRD. Residues 310 to 321 (SSPNGLSNGPSP) are compositionally biased toward low complexity. Polar residues-rich tracts occupy residues 322–344 (AKST…SGTL) and 358–369 (QVNSSYSASTKQ). Over residues 372 to 394 (HDTPSSDSPSSSSDSHQSQLLSS) the composition is skewed to low complexity. A transcription activation 2 region spans residues 409–508 (KATESSTPHA…SQDFGTFFDD (100 aa)). Disulfide bonds link Cys-562–Cys-586, Cys-562–Cys-595, and Cys-586–Cys-595. Residues 562–595 (CNKIWDRLQSMEKFRNGEIDVDNLCSELRTKARC) form a c-CRD region. Positions 580–587 (IDVDNLCS) match the Nuclear export signal motif.

This sequence belongs to the bZIP family. YAP subfamily. In terms of processing, depending on the oxidative stress inducing agent, yap1 can undergo two distinct conformational changes, both involving disulfide bond formation, and both masking the nuclear export signal, thus abolishing nuclear export.

The protein localises to the nucleus. Its subcellular location is the cytoplasm. Transcription activator involved in oxidative stress response and redox homeostasis. Regulates the transcription of genes encoding antioxidant enzymes and components of the cellular thiol-reducing pathways, including thioredoxin peroxidase (aspF3), cytochrome peroxidase, and the protein AFUA_3G00730, which appears to belong to the glutathione S-transferase family. Proteins of the protein degradation pathway are also regulated by yap1, as well the p-nitroreductase family protein AFUA_5G09910. May be involved in antifungal resistance to voriconazole. In Aspergillus fumigatus (strain ATCC MYA-4609 / CBS 101355 / FGSC A1100 / Af293) (Neosartorya fumigata), this protein is AP-1-like transcription factor yap1.